The primary structure comprises 691 residues: L-type lectin-domain containing receptor kinase S.6 (691 aa).

Residues 1-25 (MNHHHYSLVIFHLILFLSLDFPTLS) form the signal peptide. Residues 26 to 311 (HRFSPPLQNL…VVGLKIPVWS (286 aa)) are Extracellular-facing. A legume-lectin like region spans residues 27 to 257 (RFSPPLQNLT…LHIVERWKFR (231 aa)). N34 and N89 each carry an N-linked (GlcNAc...) asparagine glycan. A helical membrane pass occupies residues 312 to 332 (LLPGLAAIVILVAFIVFSLIC). The Cytoplasmic segment spans residues 333 to 691 (GKKRISEEAD…PWMTPKSHFS (359 aa)). The region spanning 366–653 (FNENAIVGQG…IRGEAPLPVL (288 aa)) is the Protein kinase domain. ATP contacts are provided by residues 372-380 (VGQGASATV) and K394. The active-site Proton acceptor is the D500.

It in the C-terminal section; belongs to the protein kinase superfamily. Ser/Thr protein kinase family. This sequence in the N-terminal section; belongs to the leguminous lectin family.

Its subcellular location is the cell membrane. It carries out the reaction L-seryl-[protein] + ATP = O-phospho-L-seryl-[protein] + ADP + H(+). The enzyme catalyses L-threonyl-[protein] + ATP = O-phospho-L-threonyl-[protein] + ADP + H(+). In terms of biological role, involved in resistance response to the pathogenic oomycetes Phytophthora infestans and Phytophthora capsici and to the pathogenic bacteria Pseudomonas syringae. The sequence is that of L-type lectin-domain containing receptor kinase S.6 from Arabidopsis thaliana (Mouse-ear cress).